The following is a 785-amino-acid chain: ATP-dependent 6-phosphofructokinase 1 (785 aa).

Residues 1 to 389 (MATTHAPAEP…YHFAYKNTAT (389 aa)) are N-terminal catalytic PFK domain 1. Residues Gly-23, 86-87 (RS), and 116-119 (GDGS) contribute to the ATP site. Position 117 (Asp-117) interacts with Mg(2+). Residues 162–164 (SID), Arg-199, 206–208 (MGR), Glu-263, Arg-291, and 297–300 (HTQR) each bind substrate. Asp-164 acts as the Proton acceptor in catalysis. The tract at residues 390–403 (PDHPKLILPENKRM) is interdomain linker. The segment at 404–785 (RIAIIHVGAP…KTGWSCYENC (382 aa)) is C-terminal regulatory PFK domain 2. Beta-D-fructose 2,6-bisphosphate-binding positions include Arg-480, 537-541 (TISNN), Arg-575, 582-584 (QGG), Glu-642, Arg-668, 674-677 (HFQQ), and Arg-749.

The protein belongs to the phosphofructokinase type A (PFKA) family. ATP-dependent PFK group I subfamily. Eukaryotic two domain clade 'E' sub-subfamily. Homotetramer. Requires Mg(2+) as cofactor.

It is found in the cytoplasm. It catalyses the reaction beta-D-fructose 6-phosphate + ATP = beta-D-fructose 1,6-bisphosphate + ADP + H(+). Its pathway is carbohydrate degradation; glycolysis; D-glyceraldehyde 3-phosphate and glycerone phosphate from D-glucose: step 3/4. With respect to regulation, allosterically activated by ADP, AMP, or fructose 2,6-bisphosphate, and allosterically inhibited by ATP or citrate. Catalyzes the phosphorylation of D-fructose 6-phosphate to fructose 1,6-bisphosphate by ATP, the first committing step of glycolysis. In Aspergillus oryzae (strain ATCC 42149 / RIB 40) (Yellow koji mold), this protein is ATP-dependent 6-phosphofructokinase 1 (pfkA).